A 189-amino-acid polypeptide reads, in one-letter code: Glycerol-3-phosphate acyltransferase (189 aa).

The next 5 membrane-spanning stretches (helical) occupy residues 1–21 (MFWL…AIVL), 50–70 (KLAI…VLLA), 77–97 (LHAQ…PLYF), 111–131 (MLMG…LLTF), and 151–171 (LLAW…VMIV).

Belongs to the PlsY family. As to quaternary structure, probably interacts with PlsX.

It is found in the cell inner membrane. The catalysed reaction is an acyl phosphate + sn-glycerol 3-phosphate = a 1-acyl-sn-glycero-3-phosphate + phosphate. Its pathway is lipid metabolism; phospholipid metabolism. Catalyzes the transfer of an acyl group from acyl-phosphate (acyl-PO(4)) to glycerol-3-phosphate (G3P) to form lysophosphatidic acid (LPA). This enzyme utilizes acyl-phosphate as fatty acyl donor, but not acyl-CoA or acyl-ACP. The polypeptide is Glycerol-3-phosphate acyltransferase (Pseudomonas putida (strain ATCC 700007 / DSM 6899 / JCM 31910 / BCRC 17059 / LMG 24140 / F1)).